The primary structure comprises 179 residues: Peptide deformylase 2 (179 aa).

The Fe cation site is built by Cys-101 and His-143. Glu-144 is a catalytic residue. His-147 serves as a coordination point for Fe cation.

The protein belongs to the polypeptide deformylase family. Fe(2+) is required as a cofactor.

It carries out the reaction N-terminal N-formyl-L-methionyl-[peptide] + H2O = N-terminal L-methionyl-[peptide] + formate. Functionally, removes the formyl group from the N-terminal Met of newly synthesized proteins. Requires at least a dipeptide for an efficient rate of reaction. N-terminal L-methionine is a prerequisite for activity but the enzyme has broad specificity at other positions. This chain is Peptide deformylase 2, found in Pseudomonas syringae pv. tomato (strain ATCC BAA-871 / DC3000).